The primary structure comprises 299 residues: Taste receptor type 2 member 4 (299 aa).

At 1 to 9 the chain is on the extracellular side; sequence MLRLFYFSA. The chain crosses the membrane as a helical span at residues 10–30; sequence IIASVILNFVGIIMNLFITVV. At 31 to 46 the chain is on the cytoplasmic side; that stretch reads NCKTWVKSHRISSSDR. The helical transmembrane segment at 47–67 threads the bilayer; the sequence is ILFSLGITRFLMLGLFLVNTI. At 68–81 the chain is on the extracellular side; sequence YFVSSNTERSVYLS. The chain crosses the membrane as a helical span at residues 82-102; it reads AFFVLCFMFLDSSSVWFVTLL. Residues 103 to 131 lie on the Cytoplasmic side of the membrane; that stretch reads NILYCVKITNFQHSVFLLLKRNISPKIPR. A helical transmembrane segment spans residues 132-152; that stretch reads LLLACVLISAFTTCLYITLSQ. Topologically, residues 153 to 172 are extracellular; sequence ASPFPELVTTRNNTSFNISE. N-linked (GlcNAc...) asparagine glycosylation is found at N164, N165, and N169. Residues 173–193 traverse the membrane as a helical segment; sequence GILSLVVSLVLSSSLQFIINV. The Cytoplasmic portion of the chain corresponds to 194–230; the sequence is TSASLLIHSLRRHIQKMQKNATGFWNPQTEAHVGAMK. A helical transmembrane segment spans residues 231–251; it reads LMVYFLILYIPYSVATLVQYL. Over 252–262 the chain is Extracellular; sequence PFYAGMDMGTK. Residues 263-283 traverse the membrane as a helical segment; sequence SICLIFATLYSPGHSVLIIIT. The Cytoplasmic portion of the chain corresponds to 284-299; it reads HPKLKTTAKKILCFKK.

Belongs to the G-protein coupled receptor T2R family. In terms of tissue distribution, expressed in subsets of taste receptor cells of the tongue and palate epithelium and exclusively in gustducin-positive cells. Expressed on airway ciliated epithelium.

It is found in the membrane. Its subcellular location is the cell projection. The protein localises to the cilium membrane. Its function is as follows. Gustducin-coupled receptor for denatonium and N(6)-propyl-2-thiouracil implicated in the perception of bitter compounds in the oral cavity and the gastrointestinal tract. Signals through PLCB2 and the calcium-regulated cation channel TRPM5. In airway epithelial cells, binding of denatonium increases the intracellular calcium ion concentration and stimulates ciliary beat frequency. This is Taste receptor type 2 member 4 (TAS2R4) from Homo sapiens (Human).